The primary structure comprises 401 residues: Odorant receptor 88a (401 aa).

The Cytoplasmic segment spans residues 1–26; it reads MKPTEIKKPYRMEEFLRPQMFQEVAQ. Residues 27 to 47 form a helical membrane-spanning segment; that stretch reads MVHFQWRRNPVDNSMVNASMV. At 48-52 the chain is on the extracellular side; it reads PFCLS. The helical transmembrane segment at 53–73 threads the bilayer; sequence AFLNVLFFGCNGWDIIGHFWL. At 74-142 the chain is on the cytoplasmic side; it reads GHPANQNPPV…NFWQRYRFIR (69 aa). The chain crosses the membrane as a helical span at residues 143-163; that stretch reads IYSHLGGPMFCVVPLALFLLT. The Extracellular segment spans residues 164–191; the sequence is HEGKDTPVAQHEQLLGGWLPCGVRKDPN. The helical transmembrane segment at 192–212 threads the bilayer; the sequence is FYLLVWSFDLMCTTCGVSFFV. At 213–277 the chain is on the cytoplasmic side; it reads TFDNLFNVMQ…LCRKYNDIFK (65 aa). A helical membrane pass occupies residues 278-298; it reads VAFLVSNFVGAGSLCFYLFML. Residues 299–303 lie on the Extracellular side of the membrane; the sequence is SETSD. The helical transmembrane segment at 304–324 threads the bilayer; the sequence is VLIIAQYILPTLVLVGFTFEI. Over 325 to 370 the chain is Cytoplasmic; sequence CLRGTQLEKASEGLESSLRSQEWYLGSRRYRKFYLLWTQYCQRTQQ. Residues 371–391 form a helical membrane-spanning segment; the sequence is LGAFGLIQVNMVHFTEIMQLA. At 392–401 the chain is on the extracellular side; it reads YRLFTFLKSH.

Belongs to the insect chemoreceptor superfamily. Heteromeric odorant receptor channel (TC 1.A.69) family. Or49a subfamily. As to quaternary structure, interacts with Orco. Complexes exist early in the endomembrane system in olfactory sensory neurons (OSNs), coupling these complexes to the conserved ciliary trafficking pathway. Expressed in olfactory sensory neurons in the antenna.

The protein localises to the cell membrane. In terms of biological role, odorant receptor which mediates acceptance or avoidance behavior, depending on its substrates. The odorant receptor repertoire encodes a large collection of odor stimuli that vary widely in identity, intensity, and duration. May form a complex with Orco to form odorant-sensing units, providing sensitive and prolonged odorant signaling and calcium permeability. This Drosophila melanogaster (Fruit fly) protein is Odorant receptor 88a (Or88a).